The sequence spans 246 residues: Phosphomannomutase 2 (246 aa).

An N-acetylalanine modification is found at A2. The Nucleophile role is filled by D12. Residues D12 and D14 each coordinate Mg(2+). The active-site Proton donor/acceptor is D14. Alpha-D-mannose 1-phosphate contacts are provided by R21, R123, R134, and R141. K149 carries the post-translational modification N6-acetyllysine. Residues S179 and D181 each coordinate alpha-D-mannose 1-phosphate. Positions 209, 221, 223, and 226 each coordinate Mg(2+).

The protein belongs to the eukaryotic PMM family. In terms of assembly, homodimer.

Its subcellular location is the cytoplasm. It carries out the reaction alpha-D-mannose 1-phosphate = D-mannose 6-phosphate. The protein operates within nucleotide-sugar biosynthesis; GDP-alpha-D-mannose biosynthesis; alpha-D-mannose 1-phosphate from D-fructose 6-phosphate: step 2/2. Involved in the synthesis of the GDP-mannose and dolichol-phosphate-mannose required for a number of critical mannosyl transfer reactions. This Macaca fascicularis (Crab-eating macaque) protein is Phosphomannomutase 2 (PMM2).